The following is a 733-amino-acid chain: Exosome complex exonuclease RRP6 (733 aa).

Serine 138 carries the post-translational modification Phosphoserine. One can recognise a 3'-5' exonuclease domain in the interval 214-380 (IWVDTSTELE…NIYDQLRNKL (167 aa)). 2 residues coordinate Mn(2+): aspartate 238 and glutamate 240. Zn(2+) contacts are provided by aspartate 238 and glutamate 240. Glutamate 240 and histidine 241 together coordinate AMP. UMP-binding residues include glutamate 240 and histidine 241. Aspartate 296 is a binding site for Mn(2+). AMP is bound by residues tryptophan 299, lysine 342, and glutamine 345. UMP contacts are provided by tryptophan 299, lysine 342, and glutamine 345. Mn(2+) is bound at residue aspartate 365. Zn(2+) is bound at residue aspartate 365. The region spanning 435 to 515 (PPEREVLVRE…RDALRNIKNT (81 aa)) is the HRDC domain. Threonine 520 carries the post-translational modification Phosphothreonine. 2 positions are modified to phosphoserine: serine 640 and serine 645. The disordered stretch occupies residues 662 to 733 (IQKKQPAKEK…AKGKNLSFKR (72 aa)). Basic and acidic residues predominate over residues 667-680 (PAKEKGVTEKDAVD). A compositionally biased stretch (polar residues) spans 687–697 (ILSNKPGQNNR). 2 consecutive short sequence motifs (nuclear localization signal) follow at residues 700–704 (KKRRF) and 718–721 (KKRR). Positions 716-733 (AAKKRRPAAKGKNLSFKR) are enriched in basic residues.

The protein belongs to the exosome component 10/RRP6 family. In terms of assembly, component of the RNA exosome complex. Specifically part of the catalytically inactive RNA exosome core complex (Exo-9) which may associate with the catalytic subunits RRP6 and DIS3 in cytoplasmic- and nuclear-specific RNA exosome complex forms. Exo-9 is formed by a hexameric base ring of RNase PH domain-containing subunits and a cap ring consisting of CSL4, RRP4 and RRP40. RRP6 specifically is part of the nuclear form of the RNA exosome complex; the association appears to be mediated by Exo-9 and not by DIS3. Interacts with LRP1. Interacts with NPL3, NOP53 and PAP1.

Its subcellular location is the nucleus. It localises to the nucleolus. Its function is as follows. Nuclear-specific catalytic component of the RNA exosome complex which has 3'-&gt;5' exoribonuclease activity and participates in a multitude of cellular RNA processing and degradation events. In the nucleus, the RNA exosome complex is involved in proper maturation of stable RNA species such as rRNA, snRNA and snoRNA, in the elimination of RNA processing by-products and non-coding 'pervasive' transcripts, such as antisense RNA species and cryptic unstable transcripts (CUTs), and of mRNAs with processing defects, thereby limiting or excluding their export to the cytoplasm. The catalytic inactive RNA exosome core complex of 9 subunits (Exo-9) is proposed to play a pivotal role in the binding and presentation of RNA for ribonucleolysis, and to serve as a scaffold for the association with catalytic subunits and accessory proteins or complexes. RRP6 has 3'-5' exonuclease activity which is not modulated upon association with Exo-9 suggesting that the complex inner RNA-binding path is not used to access its active site. This chain is Exosome complex exonuclease RRP6 (RRP6), found in Saccharomyces cerevisiae (strain ATCC 204508 / S288c) (Baker's yeast).